Consider the following 473-residue polypeptide: Serine carboxypeptidase-like 25 (473 aa).

A signal peptide spans 1–22 (MAMAKLAIFTTLMAILVMTSQG). N-linked (GlcNAc...) asparagine glycosylation is found at asparagine 46 and asparagine 143. 3 disulfides stabilise this stretch: cysteine 92–cysteine 358, cysteine 252–cysteine 263, and cysteine 288–cysteine 326. Residue serine 185 is part of the active site. Residues asparagine 289, asparagine 299, asparagine 347, and asparagine 367 are each glycosylated (N-linked (GlcNAc...) asparagine). Catalysis depends on residues aspartate 395 and histidine 447.

This sequence belongs to the peptidase S10 family. As to expression, ubiquitous.

The protein resides in the secreted. In terms of biological role, probable carboxypeptidase. The chain is Serine carboxypeptidase-like 25 (SCPL25) from Arabidopsis thaliana (Mouse-ear cress).